The primary structure comprises 881 residues: Alanine--tRNA ligase (881 aa).

Zn(2+) is bound by residues His-564, His-568, Cys-666, and His-670.

The protein belongs to the class-II aminoacyl-tRNA synthetase family. It depends on Zn(2+) as a cofactor.

The protein resides in the cytoplasm. It catalyses the reaction tRNA(Ala) + L-alanine + ATP = L-alanyl-tRNA(Ala) + AMP + diphosphate. Its function is as follows. Catalyzes the attachment of alanine to tRNA(Ala) in a two-step reaction: alanine is first activated by ATP to form Ala-AMP and then transferred to the acceptor end of tRNA(Ala). Also edits incorrectly charged Ser-tRNA(Ala) and Gly-tRNA(Ala) via its editing domain. In Caldicellulosiruptor saccharolyticus (strain ATCC 43494 / DSM 8903 / Tp8T 6331), this protein is Alanine--tRNA ligase.